The following is a 202-amino-acid chain: Orotate phosphoribosyltransferase (202 aa).

Residues Lys-93 and 113–121 (EDIITTGGS) contribute to the 5-phospho-alpha-D-ribose 1-diphosphate site. The orotate site is built by Thr-117 and Arg-145.

Belongs to the purine/pyrimidine phosphoribosyltransferase family. PyrE subfamily. In terms of assembly, homodimer. It depends on Mg(2+) as a cofactor.

It catalyses the reaction orotidine 5'-phosphate + diphosphate = orotate + 5-phospho-alpha-D-ribose 1-diphosphate. It participates in pyrimidine metabolism; UMP biosynthesis via de novo pathway; UMP from orotate: step 1/2. Its function is as follows. Catalyzes the transfer of a ribosyl phosphate group from 5-phosphoribose 1-diphosphate to orotate, leading to the formation of orotidine monophosphate (OMP). The sequence is that of Orotate phosphoribosyltransferase from Campylobacter jejuni subsp. jejuni serotype O:2 (strain ATCC 700819 / NCTC 11168).